We begin with the raw amino-acid sequence, 114 residues long: UPF0102 protein HP_0823 (114 aa).

It belongs to the UPF0102 family.

The protein is UPF0102 protein HP_0823 of Helicobacter pylori (strain ATCC 700392 / 26695) (Campylobacter pylori).